The chain runs to 317 residues: Coproporphyrinogen-III oxidase, aerobic 1 (317 aa).

Residues 38–47 (VLRDGAIFEQ) are important for dimerization. Residue Ser82 coordinates substrate. Catalysis depends on His96, which acts as the Proton donor. Residues 98 to 100 (NYR) and 269 to 274 (NGRTES) contribute to the substrate site. The interval 251–286 (YVEFNLVYDRGTIFGLQTNGRTESILMSLPPLVRWE) is important for dimerization.

The protein belongs to the aerobic coproporphyrinogen-III oxidase family. In terms of assembly, homodimer.

Its subcellular location is the cytoplasm. The enzyme catalyses coproporphyrinogen III + O2 + 2 H(+) = protoporphyrinogen IX + 2 CO2 + 2 H2O. The protein operates within porphyrin-containing compound metabolism; protoporphyrin-IX biosynthesis; protoporphyrinogen-IX from coproporphyrinogen-III (O2 route): step 1/1. Its function is as follows. Key enzyme in heme biosynthesis. Catalyzes the oxidative decarboxylation of propionic acid side chains of rings A and B of coproporphyrinogen III. This is Coproporphyrinogen-III oxidase, aerobic 1 from Nostoc sp. (strain PCC 7120 / SAG 25.82 / UTEX 2576).